Reading from the N-terminus, the 218-residue chain is Probable glutamine ABC transporter permease protein GlnP (218 aa).

A run of 3 helical transmembrane segments spans residues F19 to I39, L65 to L85, and F188 to L208. Residues F19–A210 enclose the ABC transmembrane type-1 domain.

It belongs to the binding-protein-dependent transport system permease family. The complex is composed of two ATP-binding proteins (GlnQ), two transmembrane proteins (GlnM and GlnP) and a solute-binding protein (GlnH).

The protein resides in the cell membrane. In terms of biological role, part of the ABC transporter complex GlnHMPQ involved in glutamine transport. Probably responsible for the translocation of the substrate across the membrane. This is Probable glutamine ABC transporter permease protein GlnP (glnP) from Bacillus subtilis (strain 168).